We begin with the raw amino-acid sequence, 467 residues long: Ribulose bisphosphate carboxylase large chain (467 aa).

Positions 1 to 2 are excised as a propeptide; sequence MS. N-acetylproline is present on P3. K14 is subject to N6,N6,N6-trimethyllysine. Substrate is bound by residues N123 and T173. K175 acts as the Proton acceptor in catalysis. K177 contacts substrate. Residues K201, D203, and E204 each coordinate Mg(2+). K201 carries the N6-carboxylysine modification. The Proton acceptor role is filled by H294. The substrate site is built by R295, H327, and S379.

It belongs to the RuBisCO large chain family. Type I subfamily. Heterohexadecamer of 8 large chains and 8 small chains; disulfide-linked. The disulfide link is formed within the large subunit homodimers. The cofactor is Mg(2+). In terms of processing, the disulfide bond which can form in the large chain dimeric partners within the hexadecamer appears to be associated with oxidative stress and protein turnover.

It is found in the plastid. It localises to the chloroplast. It carries out the reaction 2 (2R)-3-phosphoglycerate + 2 H(+) = D-ribulose 1,5-bisphosphate + CO2 + H2O. It catalyses the reaction D-ribulose 1,5-bisphosphate + O2 = 2-phosphoglycolate + (2R)-3-phosphoglycerate + 2 H(+). Its function is as follows. RuBisCO catalyzes two reactions: the carboxylation of D-ribulose 1,5-bisphosphate, the primary event in carbon dioxide fixation, as well as the oxidative fragmentation of the pentose substrate in the photorespiration process. Both reactions occur simultaneously and in competition at the same active site. The polypeptide is Ribulose bisphosphate carboxylase large chain (Calamus usitatus (Palm tree)).